The sequence spans 113 residues: Large ribosomal subunit protein uL22 (113 aa).

It belongs to the universal ribosomal protein uL22 family. As to quaternary structure, part of the 50S ribosomal subunit.

This protein binds specifically to 23S rRNA; its binding is stimulated by other ribosomal proteins, e.g. L4, L17, and L20. It is important during the early stages of 50S assembly. It makes multiple contacts with different domains of the 23S rRNA in the assembled 50S subunit and ribosome. In terms of biological role, the globular domain of the protein is located near the polypeptide exit tunnel on the outside of the subunit, while an extended beta-hairpin is found that lines the wall of the exit tunnel in the center of the 70S ribosome. The sequence is that of Large ribosomal subunit protein uL22 from Halothermothrix orenii (strain H 168 / OCM 544 / DSM 9562).